The following is a 62-amino-acid chain: Photosystem II reaction center protein Z (62 aa).

Helical transmembrane passes span 8 to 28 (AVFALIATSSILLISVPVVFA) and 41 to 61 (FSGTSLWIGLVFLVGILNSLI).

It belongs to the PsbZ family. As to quaternary structure, PSII is composed of 1 copy each of membrane proteins PsbA, PsbB, PsbC, PsbD, PsbE, PsbF, PsbH, PsbI, PsbJ, PsbK, PsbL, PsbM, PsbT, PsbY, PsbZ, Psb30/Ycf12, at least 3 peripheral proteins of the oxygen-evolving complex and a large number of cofactors. It forms dimeric complexes.

The protein localises to the plastid. The protein resides in the chloroplast thylakoid membrane. Its function is as follows. May control the interaction of photosystem II (PSII) cores with the light-harvesting antenna, regulates electron flow through the 2 photosystem reaction centers. PSII is a light-driven water plastoquinone oxidoreductase, using light energy to abstract electrons from H(2)O, generating a proton gradient subsequently used for ATP formation. The sequence is that of Photosystem II reaction center protein Z from Coffea arabica (Arabian coffee).